The sequence spans 113 residues: Hydrogenase maturation factor HypA (113 aa).

A Ni(2+)-binding site is contributed by histidine 2. Positions 73, 76, 89, and 92 each coordinate Zn(2+).

It belongs to the HypA/HybF family.

Its function is as follows. Involved in the maturation of [NiFe] hydrogenases. Required for nickel insertion into the metal center of the hydrogenase. This chain is Hydrogenase maturation factor HypA, found in Paracoccus denitrificans (strain Pd 1222).